A 175-amino-acid polypeptide reads, in one-letter code: Ribosome maturation factor RimM (175 aa).

In terms of domain architecture, PRC barrel spans glutamate 96–phenylalanine 175.

This sequence belongs to the RimM family. In terms of assembly, binds ribosomal protein uS19.

It is found in the cytoplasm. An accessory protein needed during the final step in the assembly of 30S ribosomal subunit, possibly for assembly of the head region. Essential for efficient processing of 16S rRNA. May be needed both before and after RbfA during the maturation of 16S rRNA. It has affinity for free ribosomal 30S subunits but not for 70S ribosomes. The chain is Ribosome maturation factor RimM from Actinobacillus pleuropneumoniae serotype 5b (strain L20).